The primary structure comprises 152 residues: Ribosome maturation factor RimP (152 aa).

Belongs to the RimP family.

Its subcellular location is the cytoplasm. Its function is as follows. Required for maturation of 30S ribosomal subunits. In Ectopseudomonas mendocina (strain ymp) (Pseudomonas mendocina), this protein is Ribosome maturation factor RimP.